The primary structure comprises 835 residues: Replication origin-binding protein (835 aa).

The region spanning 54–215 (PGMSQTRPVT…SGLRGDENIH (162 aa)) is the Helicase ATP-binding domain. ATP is bound at residue 67 to 74 (APMGSGKT).

Belongs to the herpesviridae OriBP family. As to quaternary structure, homodimer. Interacts with the major DNA-binding protein. Interacts with the helicase/primase component 52 and the polymerase accessory protein.

It localises to the host nucleus. Its function is as follows. Functions as a docking protein to recruit essential components of the viral replication machinery to viral DNA origins. In the presence of the major DNA-binding protein, opens dsDNA leading to a conformational change in the origin that facilitates DNA unwinding and subsequent replication. The polypeptide is Replication origin-binding protein (Varicella-zoster virus (strain Oka vaccine) (HHV-3)).